A 344-amino-acid polypeptide reads, in one-letter code: MEDLQLVLFVLGAIAIVAVLVHGFWSIRRQQPKSLKDSPMGNFYKKQAERGEAAPAPKRVDAEGFDSDGIGAVRVRKASESQTPEAPAVNPYLKQEAKVEPQIEPKPQFKQEPSMAQPDFSLQSPSVDEPHRGTKASRQEPVLKSNTAHLNQEHAGQSHAAMVAQKVAEEQRAQVQKPTQTALFDDEVYQEQQPQAVEEAPETEESLGEPRDVLVLHVVAKEGQQLNGAELLPCFLTLNFKYGDMNIFHRHVDNAGNGKVLFSIANMVKPGVFDPDNMEQFSTLGVVFFMTLPCYGDALMNFSIMLNSARQLADDIDAVVLDGQRQPWGEFTKQDYLHRIRANA.

Residues 1–6 (MEDLQL) are Periplasmic-facing. Residues 7–27 (VLFVLGAIAIVAVLVHGFWSI) form a helical membrane-spanning segment. The Cytoplasmic segment spans residues 28-344 (RRQQPKSLKD…DYLHRIRANA (317 aa)). Disordered stretches follow at residues 75–94 (VRKA…PYLK) and 108–139 (QFKQ…ASRQ).

It belongs to the ZipA family. Interacts with FtsZ via their C-terminal domains.

Its subcellular location is the cell inner membrane. Essential cell division protein that stabilizes the FtsZ protofilaments by cross-linking them and that serves as a cytoplasmic membrane anchor for the Z ring. Also required for the recruitment to the septal ring of downstream cell division proteins. The protein is Cell division protein ZipA of Shewanella oneidensis (strain ATCC 700550 / JCM 31522 / CIP 106686 / LMG 19005 / NCIMB 14063 / MR-1).